Reading from the N-terminus, the 223-residue chain is Pleckstrin homology domain-containing family B member 1 (223 aa).

The PH domain maps to 2–109 (ALVRGGWLWR…WKTALMEANS (108 aa)).

In terms of assembly, homodimer. Interacts (via PH domain) with MYO1C. Interacts (via PH domain) with MYO7A. Binds transducins. Highly expressed in photoreceptor cells, oligodendrocytes and throughout the myelinated parts of the central nervous system. Detected in brain, liver, kidney, spleen and trachea.

Its subcellular location is the membrane. The protein localises to the cytoplasm. This is Pleckstrin homology domain-containing family B member 1 (Plekhb1) from Rattus norvegicus (Rat).